We begin with the raw amino-acid sequence, 229 residues long: Small ribosomal subunit protein uS3c (229 aa).

Residues 39-128 (LRDNLFKQYP…RIILTILKVQ (90 aa)) form the KH type-2 domain.

This sequence belongs to the universal ribosomal protein uS3 family. As to quaternary structure, part of the 30S ribosomal subunit.

It localises to the plastid. Its subcellular location is the chloroplast. This is Small ribosomal subunit protein uS3c (rps3) from Tupiella akineta (Green alga).